The following is a 121-amino-acid chain: Autophagy-related protein 8f (121 aa).

The Phosphatidylethanolamine amidated glycine moiety is linked to residue glycine 117. The propeptide at 118–121 (FGSP) is removed in mature form.

The protein belongs to the ATG8 family. In terms of assembly, interacts with ATG4. Interacts with NBR1. Interacts with ATI1 and ATI2. Interacts with SH3P2. Post-translationally, the C-terminal 4 residues are removed by ATG4 to expose Gly-117 at the C-terminus. This Gly-117 forms then a thioester bond with the 'Cys-558' of ATG7 (E1-like activating enzyme) before being transferred to the 'Cys-258' of ATG3 (the specific E2 conjugating enzyme), in order to be finally amidated with phosphatidylethanolamine. This lipid modification anchors ATG8 to autophagosomes. In terms of tissue distribution, constitutively expressed.

The protein localises to the cytoplasmic vesicle. Its subcellular location is the autophagosome membrane. It is found in the vacuole membrane. The protein resides in the cytoplasm. It localises to the cytoskeleton. Ubiquitin-like modifier involved in autophagosomes formation. May mediate the delivery of the autophagosomes to the vacuole via the microtubule cytoskeleton. The chain is Autophagy-related protein 8f (ATG8F) from Arabidopsis thaliana (Mouse-ear cress).